An 852-amino-acid chain; its full sequence is Sarcoplasmic reticulum histidine-rich calcium-binding protein (852 aa).

The N-terminal stretch at 1-27 (MGCRGPWLHTCLLWAAVASLLLPPAVT) is a signal peptide. A Pyrrolidone carboxylic acid modification is found at Q28. Residues 44-58 (AGAPGPSGEAAAAGL) show a composition bias toward low complexity. Residues 44 to 770 (AGAPGPSGEA…EDTGPEDTQE (727 aa)) form a disordered region. 2 tandem repeats follow at residues 59-79 (GHHG…SMEN) and 80-100 (GHHF…SREY). The interval 59-100 (GHHGHSHRSPGEENEDVSMENGHHFWSHRDHGETDDEVSREY) is 2 X approximate tandem repeats. The segment covering 79-101 (NGHHFWSHRDHGETDDEVSREYG) has biased composition (basic and acidic residues). Position 120 is a phosphoserine (S120). Residues 146-157 (LAEHGSHGHGHE) show a composition bias toward basic and acidic residues. 12 stretches are compositionally biased toward acidic residues: residues 184–195 (EEGEEEEEEEEV), 208–217 (DEEDEDDDST), 233–246 (EEDE…GDST), 261–275 (EEED…GDST), 291–303 (EEDE…GDST), 319–332 (EEDD…GDST), 348–360 (EEDE…GDST), 376–388 (EEDE…GDST), 404–416 (EEDE…GDST), 432–444 (EEDE…GDST), 459–468 (EEEDEDDDDE), and 484–497 (EDDG…DDST). Repeat copies occupy residues 199–224 (HRHR…RHQA), 225–253 (HRHR…HHQA), 254–282 (HRHR…RHQA), 283–310 (HRHR…RHQA), 311–339 (HRHR…RHQA), 340–367 (HRHR…RHQA), 368–395 (HRHR…RHQA), 396–423 (HRHR…HHQA), 424–451 (HRHR…RHQA), and 452–470 (HRHR…DEGE). Residues 199–470 (HRHRGHGKED…EDEDDDDEGE (272 aa)) are 10 X tandem repeats, acidic. The segment at 471–585 (HHHVPHRGHR…HHVASHPPPG (115 aa)) is 4 X approximate tandem repeats. The segment covering 509 to 536 (HGKEEAEVTSDEHHHHVPDHGHQGHGDK) has biased composition (basic and acidic residues). Phosphoserine is present on residues S518, S544, and S614. Basic and acidic residues-rich tracts occupy residues 587 to 619 (RSRE…ERGH), 630 to 646 (PPED…KEEV), and 658 to 681 (DGSR…HHSL). The segment covering 722–733 (EEEEEEEEEEEE) has biased composition (acidic residues). Low complexity predominate over residues 746–757 (SGREAAGGASSE). The segment covering 758 to 769 (ESAEDTGPEDTQ) has biased composition (acidic residues). The metal-binding stretch occupies residues 780 to 826 (CGYCTFCNRCTECEHCHCDEDSMGEHCDQCQHCQFCYLCPLVCETVC).

This sequence belongs to the HRC family. The N-terminus is blocked.

It localises to the sarcoplasmic reticulum lumen. Its function is as follows. May play a role in the regulation of calcium sequestration or release in the SR of skeletal and cardiac muscle. The polypeptide is Sarcoplasmic reticulum histidine-rich calcium-binding protein (HRC) (Oryctolagus cuniculus (Rabbit)).